Here is a 463-residue protein sequence, read N- to C-terminus: tRNA (guanine(37)-N(1))-methyltransferase (463 aa).

Residues H207, 245–246, 274–275, and N305 contribute to the S-adenosyl-L-methionine site; these read DL and DG.

It belongs to the class I-like SAM-binding methyltransferase superfamily. TRM5/TYW2 family. As to quaternary structure, monomer.

It localises to the mitochondrion matrix. The protein localises to the nucleus. Its subcellular location is the cytoplasm. It carries out the reaction guanosine(37) in tRNA + S-adenosyl-L-methionine = N(1)-methylguanosine(37) in tRNA + S-adenosyl-L-homocysteine + H(+). Its function is as follows. Specifically methylates the N1 position of guanosine-37 in various cytoplasmic and mitochondrial tRNAs. Methylation is not dependent on the nature of the nucleoside 5' of the target nucleoside. This is the first step in the biosynthesis of wybutosine (yW), a modified base adjacent to the anticodon of tRNAs and required for accurate decoding. In Pediculus humanus subsp. corporis (Body louse), this protein is tRNA (guanine(37)-N(1))-methyltransferase.